The following is an 826-amino-acid chain: MSRPNDRITLPPANAQRTNMTCHFCIVGCGYHVYKWPELQEGGRAPEQNALGLDFRKQLPPLAVTLTPAMTNVVTEHNGRRYNIMVVPDKACVVNSGLSSTRGGKMASYMYTPTGDGKQRLKAPRLYAADQWVDTTWDHAMALYAGLIKKTLDKDGPQGVFFSCFDHGGAGGGFENTWGTGKLMFSAIQTPMVRIHNRPAYNSECHATREMGIGELNNAYEDAQLADVIWSIGNNPYESQTNYFLNHWLPNLQGATTSKKKERFPNENFPQARIIFVDPRETPSVAIARHVAGNDRVLHLAIEPGTDTALFNGLFTYVVEQGWIDKPFIEAHTKGFDDAVKTNRLSLDECSNITGVPVDMLKRAAEWSYKPKASGQAPRTMHAYEKGIIWGNDNYVIQSALLDLVIATHNVGRRGTGCVRMGGHQEGYTRPPYPGDKKIYIDQELIKGKGRIMTWWGCNNFQTSNNAQALREAILQRSAIVKQAMQKARGATTEEMVDVIYEATQNGGLFVTSINLYPTKLAEAAHLMLPAAHPGEMNLTSMNGERRIRLSEKFMDPPGTAMADCLIAARIANALRDMYQKDGKAEMAAQFEGFDWKTEEDAFNDGFRRAGQPGAPAIDSQGGSTGHLVTYDRLRKSGNNGVQLPVVSWDESKGLVGTEMLYTEGKFDTDDGKAHFKPAPWNGLPATVQQQKDKYRFWLNNGRNNEVWQTAYHDQYNSLMQERYPMAYIEMNPDDCKQLDVTGGDIVEVYNDFGSTFAMVYPVAEIKRGQTFMLFGYVNGIQGDVTTDWTDRNIIPYYKGTWGDIRKVGSMEEFKRTVSFKSRRFA.

[3Fe-4S] cluster-binding residues include Cys-22, Cys-25, and Cys-29. Residues His-196, Glu-204, Arg-420, and His-424 each coordinate substrate.

It belongs to the prokaryotic molybdopterin-containing oxidoreductase family. In terms of assembly, heterodimer consisting of a large and a small subunit. Requires [3Fe-4S] cluster as cofactor. Mo-bis(molybdopterin guanine dinucleotide) is required as a cofactor.

The catalysed reaction is 2 oxidized [azurin] + arsenite + H2O = 2 reduced [azurin] + arsenate + 3 H(+). Involved in the detoxification of arsenic. Oxidizes As(III)O3(3-) (arsenite) to the somewhat less toxic As(V)O4(3-) (arsenate). In Alcaligenes faecalis, this protein is Arsenite oxidase subunit AioA (aioA).